A 504-amino-acid polypeptide reads, in one-letter code: MPTVEELYRNYGILADATEQVGQHKDAYQVILDGVKGGTKEKRLAAQFIPKFFKHFPELADSAINAQLDLCEDEDVSIRRQAIKELPQFATGENLPRVADILTQLLQTDDSAEFNLVNNALLSIFKMDAKGTLGGLFSQILQGEDIVRERAIKFLSTKLKTLPDEVLTKEVEELILTESKKVLEDVTGEEFVLFMKILSGLKSLQTVSGRQQLVELVAEQADLEQTFNPSDPDCVDRLLQCTRQAVPLFSKNVHSTRFVTYFCEQVLPNLGTLTTPVEGLDIQLEVLKLLAEMSSFCGDMEKLETNLRKLFDKLLEYMPLPPEEAENGENAGNEEPKLQFSYVECLLYSFHQLGRKLPDFLTAKLNAEKLKDFKIRLQYFARGLQVYIRQLRLALQGKTGEALKTEENKIKVVALKITNNINVLIKDLFHIPPSYKSTVTLSWKPVQKVEIGQKRASEDTTSGSPPKKSSAGPKRDARQIYNPPSGKYSSNLGNFNYERSLQGK.

The ARM-like and Heat-like helical repeats stretch occupies residues 1–360 (MPTVEELYRN…HQLGRKLPDF (360 aa)). At Lys251 the chain carries N6-acetyllysine. The segment at 370–391 (LKDFKIRLQYFARGLQVYIRQL) is leucine-zipper. Thr399 is subject to Phosphothreonine. Residues 452–504 (GQKRASEDTTSGSPPKKSSAGPKRDARQIYNPPSGKYSSNLGNFNYERSLQGK) form a disordered region. The Nuclear localization signal signature appears at 454-475 (KRASEDTTSGSPPKKSSAGPKR). Phosphoserine occurs at positions 462, 464, and 469. Positions 462–472 (SGSPPKKSSAG) are enriched in low complexity. Residues 487–504 (KYSSNLGNFNYERSLQGK) show a composition bias toward polar residues.

This sequence belongs to the API5 family. As to quaternary structure, monomer. Interacts with FGF2 and ACIN1. Post-translationally, acetylation at Lys-251 impairs antiapoptotic function.

The protein localises to the nucleus. It is found in the cytoplasm. Functionally, antiapoptotic factor that may have a role in protein assembly. Negatively regulates ACIN1. By binding to ACIN1, it suppresses ACIN1 cleavage from CASP3 and ACIN1-mediated DNA fragmentation. Also known to efficiently suppress E2F1-induced apoptosis. This chain is Apoptosis inhibitor 5 (API5), found in Pongo abelii (Sumatran orangutan).